A 957-amino-acid polypeptide reads, in one-letter code: ERC protein 2 (957 aa).

Polar residues predominate over residues 1 to 13 (MYGSARTISNPEG). The interval 1-44 (MYGSARTISNPEGSPSRSPRLPRSPRLGHRRTSSGGGGGTGKTL) is disordered. The segment covering 14-25 (SPSRSPRLPRSP) has biased composition (low complexity). Ser-65 and Ser-666 each carry phosphoserine. Positions 140–917 (RQVRDSTMLD…RMKLMADNYD (778 aa)) form a coiled coil. The segment at 760–957 (DQNKKVANLK…DQDDEEGIWA (198 aa)) is involved in binding to RIMS1. Positions 918-957 (DDHHHYHHHHHHHHHRSPGRSQHSNHRPSPDQDDEEGIWA) are disordered. The span at 922 to 943 (HYHHHHHHHHHRSPGRSQHSNH) shows a compositional bias: basic residues. Acidic residues predominate over residues 948–957 (DQDDEEGIWA).

As to quaternary structure, interacts with BSN, ERC1, PPFIA1, PPFIA2, PPFIA3 and PPFIA4. Interacts through its C-terminus with the PDZ domain of RIMS1. Part of a complex consisting of ERC2, RIMS1 and UNC13A. Predominantly expressed in brain, including hippocampus, cortex, cerebellum, amygdala and olfactory bulb.

It is found in the cytoplasm. It localises to the synapse. Its subcellular location is the presynaptic active zone. The protein localises to the cytoskeleton. In terms of biological role, thought to be involved in the organization of the cytomatrix at the nerve terminals active zone (CAZ) which regulates neurotransmitter release. Seems to act together with BSN. May recruit liprin-alpha proteins to the CAZ. The polypeptide is ERC protein 2 (Erc2) (Rattus norvegicus (Rat)).